Here is a 370-residue protein sequence, read N- to C-terminus: Queuine tRNA-ribosyltransferase (370 aa).

Residue aspartate 93 is the Proton acceptor of the active site. Residues 93–97, aspartate 147, glutamine 190, and glycine 217 contribute to the substrate site; that span reads DSGGF. The segment at 248-254 is RNA binding; the sequence is GVGTPDY. Catalysis depends on aspartate 267, which acts as the Nucleophile. Residues 272–276 are RNA binding; important for wobble base 34 recognition; sequence TRVAR. Zn(2+) contacts are provided by cysteine 305, cysteine 307, cysteine 310, and histidine 336.

Belongs to the queuine tRNA-ribosyltransferase family. In terms of assembly, homodimer. Within each dimer, one monomer is responsible for RNA recognition and catalysis, while the other monomer binds to the replacement base PreQ1. Zn(2+) is required as a cofactor.

It carries out the reaction 7-aminomethyl-7-carbaguanine + guanosine(34) in tRNA = 7-aminomethyl-7-carbaguanosine(34) in tRNA + guanine. Its pathway is tRNA modification; tRNA-queuosine biosynthesis. In terms of biological role, catalyzes the base-exchange of a guanine (G) residue with the queuine precursor 7-aminomethyl-7-deazaguanine (PreQ1) at position 34 (anticodon wobble position) in tRNAs with GU(N) anticodons (tRNA-Asp, -Asn, -His and -Tyr). Catalysis occurs through a double-displacement mechanism. The nucleophile active site attacks the C1' of nucleotide 34 to detach the guanine base from the RNA, forming a covalent enzyme-RNA intermediate. The proton acceptor active site deprotonates the incoming PreQ1, allowing a nucleophilic attack on the C1' of the ribose to form the product. After dissociation, two additional enzymatic reactions on the tRNA convert PreQ1 to queuine (Q), resulting in the hypermodified nucleoside queuosine (7-(((4,5-cis-dihydroxy-2-cyclopenten-1-yl)amino)methyl)-7-deazaguanosine). The polypeptide is Queuine tRNA-ribosyltransferase (Natranaerobius thermophilus (strain ATCC BAA-1301 / DSM 18059 / JW/NM-WN-LF)).